The primary structure comprises 578 residues: Putative diflavin flavoprotein A 2 (578 aa).

The segment at 48–240 (RHGTTYNSFL…LQVVLVATGH (193 aa)) is zinc metallo-hydrolase. 6 residues coordinate Fe cation: histidine 97, glutamate 99, aspartate 101, histidine 164, aspartate 183, and histidine 240. A Flavodoxin-like domain is found at 269 to 406 (VALFYVDGYG…LCREAGTDLG (138 aa)). A flavodoxin-reductase-like region spans residues 429–578 (IGRLSTGLYI…THHRKLGNHY (150 aa)).

The protein in the N-terminal section; belongs to the zinc metallo-hydrolase group 3 family. In the C-terminal section; belongs to the flavodoxin reductase family. Fe cation is required as a cofactor.

Its function is as follows. Mediates electron transfer from NADH to oxygen, reducing it to water. This modular protein has 3 redox cofactors, in other organisms the same activity requires 2 or 3 proteins. This Synechocystis sp. (strain ATCC 27184 / PCC 6803 / Kazusa) protein is Putative diflavin flavoprotein A 2 (dfa2).